We begin with the raw amino-acid sequence, 193 residues long: Potassium-transporting ATPase KdpC subunit (193 aa).

A helical membrane pass occupies residues 14 to 34 (ITFTFLVLCGLVYPLIVTGIA).

It belongs to the KdpC family. The system is composed of three essential subunits: KdpA, KdpB and KdpC.

It is found in the cell membrane. Part of the high-affinity ATP-driven potassium transport (or Kdp) system, which catalyzes the hydrolysis of ATP coupled with the electrogenic transport of potassium into the cytoplasm. This subunit acts as a catalytic chaperone that increases the ATP-binding affinity of the ATP-hydrolyzing subunit KdpB by the formation of a transient KdpB/KdpC/ATP ternary complex. In Bacillus anthracis (strain A0248), this protein is Potassium-transporting ATPase KdpC subunit.